Consider the following 310-residue polypeptide: Protein FAM153A (310 aa).

Disordered regions lie at residues 39–58 (LGVP…LCPP), 108–136 (QTNG…HTME), 156–184 (SYNG…DLEE), and 250–297 (TITG…KKSR). Over residues 259-268 (SASPSSAPAE) the composition is skewed to low complexity. Residues 270–282 (ATEKTKVEEEVKT) are compositionally biased toward basic and acidic residues. A compositionally biased stretch (basic residues) spans 283 to 297 (RKPKKKTRKPSKKSR).

Belongs to the FAM153 family.

The sequence is that of Protein FAM153A (FAM153A) from Homo sapiens (Human).